The following is a 317-amino-acid chain: Pantothenate kinase (317 aa).

ATP is bound at residue 99-106 (GSVSVGKS).

Belongs to the prokaryotic pantothenate kinase family.

It localises to the cytoplasm. The catalysed reaction is (R)-pantothenate + ATP = (R)-4'-phosphopantothenate + ADP + H(+). It participates in cofactor biosynthesis; coenzyme A biosynthesis; CoA from (R)-pantothenate: step 1/5. In Mannheimia succiniciproducens (strain KCTC 0769BP / MBEL55E), this protein is Pantothenate kinase.